The primary structure comprises 265 residues: Phosphonates import ATP-binding protein PhnC (265 aa).

An ABC transporter domain is found at 18–262 (LVVEHLRKEY…HLKQIYGGEE (245 aa)). Position 51–58 (51–58 (GPSGTGKS)) interacts with ATP.

Belongs to the ABC transporter superfamily. Phosphonates importer (TC 3.A.1.9.1) family. The complex is composed of two ATP-binding proteins (PhnC), two transmembrane proteins (PhnE) and a solute-binding protein (PhnD).

Its subcellular location is the cell inner membrane. It carries out the reaction phosphonate(out) + ATP + H2O = phosphonate(in) + ADP + phosphate + H(+). In terms of biological role, part of the ABC transporter complex PhnCDE involved in phosphonates import. Responsible for energy coupling to the transport system. The protein is Phosphonates import ATP-binding protein PhnC of Nitratidesulfovibrio vulgaris (strain ATCC 29579 / DSM 644 / CCUG 34227 / NCIMB 8303 / VKM B-1760 / Hildenborough) (Desulfovibrio vulgaris).